We begin with the raw amino-acid sequence, 531 residues long: Maturase K (531 aa).

This sequence belongs to the intron maturase 2 family. MatK subfamily.

It localises to the plastid. The protein localises to the chloroplast. Usually encoded in the trnK tRNA gene intron. Probably assists in splicing its own and other chloroplast group II introns. The chain is Maturase K from Ephedra sinica (Chinese ephedra).